The chain runs to 180 residues: NAD(P)H-quinone oxidoreductase subunit I, chloroplastic (180 aa).

2 4Fe-4S ferredoxin-type domains span residues 55-84 (GRIH…VDWR) and 95-124 (LNYS…MTEE). [4Fe-4S] cluster contacts are provided by Cys-64, Cys-67, Cys-70, Cys-74, Cys-104, Cys-107, Cys-110, and Cys-114.

Belongs to the complex I 23 kDa subunit family. As to quaternary structure, NDH is composed of at least 16 different subunits, 5 of which are encoded in the nucleus. The cofactor is [4Fe-4S] cluster.

It is found in the plastid. The protein resides in the chloroplast thylakoid membrane. It carries out the reaction a plastoquinone + NADH + (n+1) H(+)(in) = a plastoquinol + NAD(+) + n H(+)(out). The enzyme catalyses a plastoquinone + NADPH + (n+1) H(+)(in) = a plastoquinol + NADP(+) + n H(+)(out). Its function is as follows. NDH shuttles electrons from NAD(P)H:plastoquinone, via FMN and iron-sulfur (Fe-S) centers, to quinones in the photosynthetic chain and possibly in a chloroplast respiratory chain. The immediate electron acceptor for the enzyme in this species is believed to be plastoquinone. Couples the redox reaction to proton translocation, and thus conserves the redox energy in a proton gradient. This chain is NAD(P)H-quinone oxidoreductase subunit I, chloroplastic, found in Hordeum vulgare (Barley).